Reading from the N-terminus, the 73-residue chain is Translation initiation factor IF-1 3 (73 aa).

The region spanning 1 to 72 (MAKEELVEFG…TKGRINYRHK (72 aa)) is the S1-like domain.

The protein belongs to the IF-1 family. Component of the 30S ribosomal translation pre-initiation complex which assembles on the 30S ribosome in the order IF-2 and IF-3, IF-1 and N-formylmethionyl-tRNA(fMet); mRNA recruitment can occur at any time during PIC assembly.

Its subcellular location is the cytoplasm. Its function is as follows. One of the essential components for the initiation of protein synthesis. Stabilizes the binding of IF-2 and IF-3 on the 30S subunit to which N-formylmethionyl-tRNA(fMet) subsequently binds. Helps modulate mRNA selection, yielding the 30S pre-initiation complex (PIC). Upon addition of the 50S ribosomal subunit IF-1, IF-2 and IF-3 are released leaving the mature 70S translation initiation complex. The protein is Translation initiation factor IF-1 3 of Cupriavidus metallidurans (strain ATCC 43123 / DSM 2839 / NBRC 102507 / CH34) (Ralstonia metallidurans).